A 396-amino-acid chain; its full sequence is Corticosteroid-binding globulin (396 aa).

The N-terminal stretch at 1 to 22 is a signal peptide; it reads MSLALYTCLLWLCTSGLWTAQA. N-linked (GlcNAc...) asparagine glycosylation is found at asparagine 88 and asparagine 216. Residue glutamine 246 coordinates cortisol. N-linked (GlcNAc...) asparagine glycosylation occurs at asparagine 252. A cortisol-binding site is contributed by aspartate 278. N-linked (GlcNAc...) asparagine glycosylation is found at asparagine 319 and asparagine 352. Tryptophan 384 is a binding site for cortisol.

It belongs to the serpin family. In terms of tissue distribution, expressed by the liver; secreted in plasma.

It localises to the secreted. In terms of biological role, major transport protein for glucocorticoids and progestins in the blood of almost all vertebrate species. This chain is Corticosteroid-binding globulin (Serpina6), found in Rattus norvegicus (Rat).